We begin with the raw amino-acid sequence, 478 residues long: ATP synthase subunit beta (478 aa).

An ATP-binding site is contributed by 151 to 158 (GGAGVGKT).

Belongs to the ATPase alpha/beta chains family. F-type ATPases have 2 components, CF(1) - the catalytic core - and CF(0) - the membrane proton channel. CF(1) has five subunits: alpha(3), beta(3), gamma(1), delta(1), epsilon(1). CF(0) has three main subunits: a(1), b(2) and c(9-12). The alpha and beta chains form an alternating ring which encloses part of the gamma chain. CF(1) is attached to CF(0) by a central stalk formed by the gamma and epsilon chains, while a peripheral stalk is formed by the delta and b chains.

Its subcellular location is the cell inner membrane. It catalyses the reaction ATP + H2O + 4 H(+)(in) = ADP + phosphate + 5 H(+)(out). Produces ATP from ADP in the presence of a proton gradient across the membrane. The catalytic sites are hosted primarily by the beta subunits. The protein is ATP synthase subunit beta of Xanthobacter autotrophicus (strain ATCC BAA-1158 / Py2).